Reading from the N-terminus, the 636-residue chain is 1-deoxy-D-xylulose-5-phosphate synthase (636 aa).

Residues His-74 and 115–117 (GHS) each bind thiamine diphosphate. A Mg(2+)-binding site is contributed by Asp-146. Thiamine diphosphate contacts are provided by residues 147-148 (GA), Asn-175, Tyr-286, and Glu-367. Position 175 (Asn-175) interacts with Mg(2+).

It belongs to the transketolase family. DXPS subfamily. In terms of assembly, homodimer. It depends on Mg(2+) as a cofactor. Thiamine diphosphate serves as cofactor.

It catalyses the reaction D-glyceraldehyde 3-phosphate + pyruvate + H(+) = 1-deoxy-D-xylulose 5-phosphate + CO2. It functions in the pathway metabolic intermediate biosynthesis; 1-deoxy-D-xylulose 5-phosphate biosynthesis; 1-deoxy-D-xylulose 5-phosphate from D-glyceraldehyde 3-phosphate and pyruvate: step 1/1. Its function is as follows. Catalyzes the acyloin condensation reaction between C atoms 2 and 3 of pyruvate and glyceraldehyde 3-phosphate to yield 1-deoxy-D-xylulose-5-phosphate (DXP). This Halothermothrix orenii (strain H 168 / OCM 544 / DSM 9562) protein is 1-deoxy-D-xylulose-5-phosphate synthase.